The primary structure comprises 81 residues: Trefoil factor 3 (81 aa).

Residues 1–23 (MEARTFWLLVVAVLALGSSSSTG) form the signal peptide. A P-type domain is found at 31-74 (NQCAVPAKDRVDCGYPEVTPEQCNNRGCCFDSSIHGVPWCFKPL). Intrachain disulfides connect C33-C59, C43-C58, and C53-C70.

As to quaternary structure, monomer. Homodimer; disulfide-linked.

It is found in the secreted. The protein localises to the extracellular space. Its subcellular location is the extracellular matrix. The protein resides in the cytoplasm. In terms of biological role, involved in the maintenance and repair of the intestinal mucosa. Promotes the mobility of epithelial cells in healing processes (motogen). This Bos taurus (Bovine) protein is Trefoil factor 3 (TFF3).